The following is a 104-amino-acid chain: L-rhamnose mutarotase (104 aa).

Residue Tyr18 participates in substrate binding. His22 acts as the Proton donor in catalysis. Residues Tyr41 and 76-77 contribute to the substrate site; that span reads WW.

The protein belongs to the rhamnose mutarotase family. As to quaternary structure, homodimer.

It is found in the cytoplasm. The catalysed reaction is alpha-L-rhamnose = beta-L-rhamnose. It participates in carbohydrate metabolism; L-rhamnose metabolism. Its function is as follows. Involved in the anomeric conversion of L-rhamnose. The polypeptide is L-rhamnose mutarotase (Shouchella clausii (strain KSM-K16) (Alkalihalobacillus clausii)).